Reading from the N-terminus, the 418-residue chain is Elongation factor 1-gamma 2 (418 aa).

The region spanning 1 to 82 (MALVLHAGSG…YVTRSKADNP (82 aa)) is the GST N-terminal domain. A GST C-terminal domain is found at 87–215 (SLIEYAHIEQ…VKQAESVPPV (129 aa)). The interval 210–265 (ESVPPVQKKAPPPKEQKPKEAKKEAPKEAPKPKAVEKPEEEEEAPKPKPKNPLDLL) is disordered. A compositionally biased stretch (basic and acidic residues) spans 221 to 246 (PPKEQKPKEAKKEAPKEAPKPKAVEK). The EF-1-gamma C-terminal domain maps to 258-418 (PKNPLDLLPP…ESLLDAKCFK (161 aa)).

EF-1 is composed of four subunits: alpha, beta, delta, and gamma.

Probably plays a role in anchoring the complex to other cellular components. The sequence is that of Elongation factor 1-gamma 2 from Oryza sativa subsp. japonica (Rice).